The following is a 117-amino-acid chain: Serine rich endogenous peptide 5 (117 aa).

The N-terminal stretch at 1 to 31 is a signal peptide; it reads MATKTSNFVSLRVSLFILLLFISSQVAIADA. An SCOOP motif motif is present at residues 41 to 55; that stretch reads LQIVRRSRSQRGRQY. Basic residues predominate over residues 42–51; the sequence is QIVRRSRSQR. The tract at residues 42 to 117 is disordered; that stretch reads QIVRRSRSQR…LPYASSPTST (76 aa). The SxS motif essential for MIK2 binding signature appears at 47 to 49; the sequence is SRS. Positions 60–84 are enriched in pro residues; that stretch reads LRVPPPPPPPLPQMPSAATPPPMPQ.

As to quaternary structure, interacts with MIK2 (via extracellular leucine-rich repeat domain); this interaction triggers the formation of complex between MIK2 and the BAK1/SERK3 and SERK4 coreceptors, and subsequent BAK1 activation by phosphorylation.

Its subcellular location is the cell membrane. It is found in the secreted. It localises to the extracellular space. The protein localises to the apoplast. In terms of biological role, brassicaceae-specific phytocytokine (plant endogenous peptide released into the apoplast) perceived by MIK2 in a BAK1/SERK3 and SERK4 coreceptors-dependent manner, that modulates various physiological and antimicrobial processes including growth prevention and reactive oxygen species (ROS) response regulation. The sequence is that of Serine rich endogenous peptide 5 from Arabidopsis thaliana (Mouse-ear cress).